Reading from the N-terminus, the 109-residue chain is Large ribosomal subunit protein uL22 (109 aa).

The protein belongs to the universal ribosomal protein uL22 family. As to quaternary structure, part of the 50S ribosomal subunit.

Functionally, this protein binds specifically to 23S rRNA; its binding is stimulated by other ribosomal proteins, e.g. L4, L17, and L20. It is important during the early stages of 50S assembly. It makes multiple contacts with different domains of the 23S rRNA in the assembled 50S subunit and ribosome. Its function is as follows. The globular domain of the protein is located near the polypeptide exit tunnel on the outside of the subunit, while an extended beta-hairpin is found that lines the wall of the exit tunnel in the center of the 70S ribosome. The protein is Large ribosomal subunit protein uL22 of Ralstonia nicotianae (strain ATCC BAA-1114 / GMI1000) (Ralstonia solanacearum).